A 157-amino-acid polypeptide reads, in one-letter code: NADH-quinone oxidoreductase subunit I (157 aa).

4Fe-4S ferredoxin-type domains follow at residues 47–78 (YLTK…VKPA) and 94–123 (SDFQ…LSNQ). Positions 58, 61, 64, 68, 103, 106, 109, and 113 each coordinate [4Fe-4S] cluster.

This sequence belongs to the complex I 23 kDa subunit family. As to quaternary structure, NDH-1 is composed of 14 different subunits. Subunits NuoA, H, J, K, L, M, N constitute the membrane sector of the complex. Requires [4Fe-4S] cluster as cofactor.

It localises to the cell inner membrane. It carries out the reaction a quinone + NADH + 5 H(+)(in) = a quinol + NAD(+) + 4 H(+)(out). Its function is as follows. NDH-1 shuttles electrons from NADH, via FMN and iron-sulfur (Fe-S) centers, to quinones in the respiratory chain. The immediate electron acceptor for the enzyme in this species is believed to be ubiquinone. Couples the redox reaction to proton translocation (for every two electrons transferred, four hydrogen ions are translocated across the cytoplasmic membrane), and thus conserves the redox energy in a proton gradient. This Protochlamydia amoebophila (strain UWE25) protein is NADH-quinone oxidoreductase subunit I (nuoI).